The primary structure comprises 846 residues: MKNRNRMIVNCVTASLMYYWSLPALAEQSSSEIKIVRDEYGMPHIYANDTWHLFYGYGYVVAQDRLFQMEMARRSTQGTVAEVLGKDFVKFDKDIRRNYWPDAIRAQIAALSPEDMSILQGYADGMNAWIDKVNTNPETLLPKQFNTFGFTPKRWEPFDVAMIFVGTMANRFSDSTSEIDNLALLTALKDKYGVSQGMAVFNQLKWLVNPSAPTTIAVQESNYPLKFNQQNSQTAALLPRYDLPAPMLDRPAKGADGALLALTAGKNRETIAAQFAQGGANGLAGYPTTSNMWVIGKSKAQDAKAIMVNGPQFGWYAPAYTYGIGLHGAGYDVTGNTPFAYPGLVFGHNGVISWGSTAGFGDDVDIFAERLSAEKPGYYLHNGKWVKMLSREETITVKNGQAETFTVWRTVHGNILQTDQTTQTAYAKSRAWDGKEVASLLAWTHQMKAKNWQEWTQQAAKQALTINWYYADVNGNIGYVHTGAYPDRQSGHDPRLPVPGTGKWDWKGLLPFEMNPKVYNPQSGYIANWNNSPQKDYPASDLFAFLWGGADRVTEIDRLLEQKPRLTADQAWDVIRQTSRQDLNLRLFLPTLQAATSGLTQSDPRRQLVETLTRWDGINLLNDDGKTWQQPGSAILNVWLTSMLKRTVVAAVPMPFDKWYSASGYETTQDGPTGSLNISVGAKILYEAVQGDKSPIPQAVDLFAGKPQQEVVLAALEDTWETLSKRYGNNVSNWKTPAMALTFRANNFFGVPQAAAEETRHQAEYQNRGTENDMIVFSPTTSDRPVLAWDVVAPGQSGFIAPDGTVDKHYEDQLKMYENFGRKSLWLTKQDVEAHKESQEVLHVQR.

An N-terminal signal peptide occupies residues 1-26; that stretch reads MKNRNRMIVNCVTASLMYYWSLPALA. Glu178 contributes to the Ca(2+) binding site. Positions 236–289 are cleaved as a propeptide — spacer peptide; sequence ALLPRYDLPAPMLDRPAKGADGALLALTAGKNRETIAAQFAQGGANGLAGYPTT. The active-site Nucleophile is Ser290. Residues Asp362, Val364, Asp365, Pro494, and Asp541 each contribute to the Ca(2+) site.

It belongs to the peptidase S45 family. As to quaternary structure, heterodimer of an alpha subunit and a beta subunit processed from the same precursor. Ca(2+) serves as cofactor.

The protein resides in the periplasm. The enzyme catalyses a penicillin + H2O = 6-aminopenicillanate + a carboxylate. The sequence is that of Penicillin G acylase (pac) from Escherichia coli.